We begin with the raw amino-acid sequence, 118 residues long: Cysteine-rich and transmembrane domain-containing protein 1 (118 aa).

2 stretches are compositionally biased toward low complexity: residues 1 to 54 (MNYE…QGYP) and 64 to 74 (YTAQPGYQGYP). The disordered stretch occupies residues 1–82 (MNYEQPPAYT…YPQPGPPTNT (82 aa)). The helical transmembrane segment at 95–112 (SGEQACLATCWAALCCCC) threads the bilayer.

This sequence belongs to the CYSTM1 family.

Its subcellular location is the membrane. In Danio rerio (Zebrafish), this protein is Cysteine-rich and transmembrane domain-containing protein 1 (cystm1).